The sequence spans 405 residues: Prostaglandin E2 receptor EP1 subtype (405 aa).

The Extracellular portion of the chain corresponds to 1–39 (MSPYGLNLSLVDEATTCVTPRVPNTSVVLPTGGNGTSPA). Residues Asn7, Asn24, and Asn34 are each glycosylated (N-linked (GlcNAc...) asparagine). A helical membrane pass occupies residues 40 to 62 (LPIFSMTLGAVSNVLALALLAQV). Residues 63 to 80 (AGRLRRRRSTATFLLFVA) lie on the Cytoplasmic side of the membrane. A helical membrane pass occupies residues 81–99 (SLLAIDLAGHVIPGALVLR). The Extracellular segment spans residues 100 to 113 (LYTAGRAPAGGACH). Cys112 and Cys190 form a disulfide bridge. The chain crosses the membrane as a helical span at residues 114-135 (FLGGCMVFFGLCPLLLGCGMAV). Over 136-157 (ERCVGVTQPLIHAARVSVARAR) the chain is Cytoplasmic. The chain crosses the membrane as a helical span at residues 158-179 (LALALLAAMALAVALLPLVHVG). At 180 to 202 (HYELQYPGTWCFISLGPPGGWRQ) the chain is on the extracellular side. Residues 203-228 (ALLAGLFAGLGLAALLAALVCNTLSG) traverse the membrane as a helical segment. Residues 229-301 (LALLRARWRR…HAHDVEMVGQ (73 aa)) lie on the Cytoplasmic side of the membrane. Residues 302-323 (LVGIMVVSCICWSPLLVLVVLA) traverse the membrane as a helical segment. Residues 324-337 (IGGWNSNSLQRPLF) are Extracellular-facing. A helical membrane pass occupies residues 338-357 (LAVRLASWNQILDPWVYILL). Over 358-405 (RQAMLRQLLRLLPLRVSAKGGPTELSLTKSAWEASSLRSSRHSGFSHL) the chain is Cytoplasmic.

Belongs to the G-protein coupled receptor 1 family. Phosphorylated. In terms of tissue distribution, highly abundant in kidney and lung. Found in a lesser extent in spleen, colon, and thymus. Also expressed in uterine myometrium and endometrium.

It is found in the cell membrane. In terms of biological role, receptor for prostaglandin E2 (PGE2). The activity of this receptor is mediated by G(q) proteins which activate a phosphatidylinositol-calcium second messenger system. May play a role as an important modulator of renal function. Implicated the smooth muscle contractile response to PGE2 in various tissues. Isoform 1 and isoform 2 have identical ligand binding properties, but isoform 2 lacks coupling to calcium mobilization and may therefore attenuate the action of PGE2 on tissues. This chain is Prostaglandin E2 receptor EP1 subtype (Ptger1), found in Rattus norvegicus (Rat).